The following is a 172-amino-acid chain: Signal peptidase complex catalytic subunit SEC11 (172 aa).

At 1 to 14 (MLSSLANPRQAASQ) the chain is on the cytoplasmic side. The helical; Signal-anchor for type II membrane protein transmembrane segment at 15–35 (LLNFALILSTAFMMWKGLSVV) threads the bilayer. At 36–172 (SDSPSPIVVV…MGLVVVLQRE (137 aa)) the chain is on the lumenal side. Residues Ser-49, His-90, and Asp-115 each act as charge relay system in the active site. Residues 158 to 169 (AMLGIMGLVVVL) are C-terminal short (CTS) helix.

The protein belongs to the peptidase S26B family. As to quaternary structure, component of the signal peptidase complex (SPC) composed of a catalytic subunit SEC11 and three accessory subunits SPC1, SPC2 and SPC3. The complex induces a local thinning of the ER membrane which is used to measure the length of the signal peptide (SP) h-region of protein substrates. This ensures the selectivity of the complex towards h-regions shorter than 18-20 amino acids. SPC associates with the translocon complex.

It is found in the endoplasmic reticulum membrane. It catalyses the reaction Cleavage of hydrophobic, N-terminal signal or leader sequences from secreted and periplasmic proteins.. In terms of biological role, catalytic component of the signal peptidase complex (SPC) which catalyzes the cleavage of N-terminal signal sequences from nascent proteins as they are translocated into the lumen of the endoplasmic reticulum. Specifically cleaves N-terminal signal peptides that contain a hydrophobic alpha-helix (h-region) shorter than 18-20 amino acids. This Colletotrichum graminicola (strain M1.001 / M2 / FGSC 10212) (Maize anthracnose fungus) protein is Signal peptidase complex catalytic subunit SEC11 (SEC11).